The chain runs to 201 residues: Recombination protein RecR (201 aa).

The C4-type zinc finger occupies cysteine 57–cysteine 72. Positions glycine 81 to proline 176 constitute a Toprim domain.

This sequence belongs to the RecR family.

In terms of biological role, may play a role in DNA repair. It seems to be involved in an RecBC-independent recombinational process of DNA repair. It may act with RecF and RecO. The sequence is that of Recombination protein RecR from Shigella boydii serotype 4 (strain Sb227).